Reading from the N-terminus, the 381-residue chain is Succinyl-diaminopimelate desuccinylase (381 aa).

H69 lines the Zn(2+) pocket. Residue D71 is part of the active site. D103 contributes to the Zn(2+) binding site. Residue E137 is the Proton acceptor of the active site. Positions 138, 166, and 355 each coordinate Zn(2+).

The protein belongs to the peptidase M20A family. DapE subfamily. In terms of assembly, homodimer. It depends on Zn(2+) as a cofactor. Co(2+) is required as a cofactor.

The catalysed reaction is N-succinyl-(2S,6S)-2,6-diaminopimelate + H2O = (2S,6S)-2,6-diaminopimelate + succinate. It functions in the pathway amino-acid biosynthesis; L-lysine biosynthesis via DAP pathway; LL-2,6-diaminopimelate from (S)-tetrahydrodipicolinate (succinylase route): step 3/3. Catalyzes the hydrolysis of N-succinyl-L,L-diaminopimelic acid (SDAP), forming succinate and LL-2,6-diaminopimelate (DAP), an intermediate involved in the bacterial biosynthesis of lysine and meso-diaminopimelic acid, an essential component of bacterial cell walls. This chain is Succinyl-diaminopimelate desuccinylase, found in Rickettsia massiliae (strain Mtu5).